Here is a 349-residue protein sequence, read N- to C-terminus: Nicotinate-nucleotide--dimethylbenzimidazole phosphoribosyltransferase (349 aa).

Residues 1 to 20 are disordered; sequence MEFATVSPPDPGTAAAARAR. E313 serves as the catalytic Proton acceptor.

The protein belongs to the CobT family.

It carries out the reaction 5,6-dimethylbenzimidazole + nicotinate beta-D-ribonucleotide = alpha-ribazole 5'-phosphate + nicotinate + H(+). Its pathway is nucleoside biosynthesis; alpha-ribazole biosynthesis; alpha-ribazole from 5,6-dimethylbenzimidazole: step 1/2. Functionally, catalyzes the synthesis of alpha-ribazole-5'-phosphate from nicotinate mononucleotide (NAMN) and 5,6-dimethylbenzimidazole (DMB). This is Nicotinate-nucleotide--dimethylbenzimidazole phosphoribosyltransferase from Mycolicibacterium paratuberculosis (strain ATCC BAA-968 / K-10) (Mycobacterium paratuberculosis).